Reading from the N-terminus, the 161-residue chain is uncharacterized protein (161 aa).

This sequence belongs to the M.jannaschii MJ0150/MJ0739/MJ0745/MJ1460/MJ1642 family.

This is an uncharacterized protein from Methanocaldococcus jannaschii (strain ATCC 43067 / DSM 2661 / JAL-1 / JCM 10045 / NBRC 100440) (Methanococcus jannaschii).